The chain runs to 210 residues: Proteasome subunit beta (210 aa).

A propeptide spans 1–9 (removed in mature form; by autocatalysis); the sequence is MDNDKYLKG. Thr10 serves as the catalytic Nucleophile.

It belongs to the peptidase T1B family. The 20S proteasome core is composed of 14 alpha and 14 beta subunits that assemble into four stacked heptameric rings, resulting in a barrel-shaped structure. The two inner rings, each composed of seven catalytic beta subunits, are sandwiched by two outer rings, each composed of seven alpha subunits. The catalytic chamber with the active sites is on the inside of the barrel. Has a gated structure, the ends of the cylinder being occluded by the N-termini of the alpha-subunits. Is capped at one or both ends by the proteasome regulatory ATPase, PAN.

Its subcellular location is the cytoplasm. The catalysed reaction is Cleavage of peptide bonds with very broad specificity.. The formation of the proteasomal ATPase PAN-20S proteasome complex, via the docking of the C-termini of PAN into the intersubunit pockets in the alpha-rings, triggers opening of the gate for substrate entry. Interconversion between the open-gate and close-gate conformations leads to a dynamic regulation of the 20S proteasome proteolysis activity. Functionally, component of the proteasome core, a large protease complex with broad specificity involved in protein degradation. This chain is Proteasome subunit beta, found in Methanosarcina thermophila.